The following is a 472-amino-acid chain: MKIKTRFAPSPTGYLHVGGARTALYSWLFARNHGGEFVLRIEDTDLERSTPEAIEAIMDGMNWLNLQWDEGPYYQTKRFDRYNNVIDEMLEAGTAYKCYCSKERLEALREEQMANGEKPRYDGRCRHSHEHHADDEPCVVRFANPQEGSVIFDDQIRGPIEFSNQELDDLIIRRTDGSPTYNFCVVVDDWDMAITHVIRGEDHINNTPRQINILKALNAPVPVYAHVSMINGDDGKKLSKRHGAVSVMQYRDDGYLPEALLNYLVRLGWSHGDQEIFTREEMIEFFSLGAVSKSASAFNTDKLLWLNHHYINTLPAEYVATHLQWHIEQENIDTRNGPQLAELVKLLGERCKTLKEIAQSCRYFYEEFAEFDADAAKKHLRPVARQPLEVVRDKLAAIVDWTAENVHHAIQATADELEVGMGKVAMPLRVAVTGAGQSRALDVTVHAIGKSRSVERINKALAFIAEREGQAS.

Residues Pro9–Gly19 carry the 'HIGH' region motif. Zn(2+) contacts are provided by Cys98, Cys100, Cys125, and His127. Positions Lys237–Arg241 match the 'KMSKS' region motif. Lys240 contacts ATP.

Belongs to the class-I aminoacyl-tRNA synthetase family. Glutamate--tRNA ligase type 1 subfamily. In terms of assembly, monomer. The cofactor is Zn(2+).

Its subcellular location is the cytoplasm. The enzyme catalyses tRNA(Glu) + L-glutamate + ATP = L-glutamyl-tRNA(Glu) + AMP + diphosphate. In terms of biological role, catalyzes the attachment of glutamate to tRNA(Glu) in a two-step reaction: glutamate is first activated by ATP to form Glu-AMP and then transferred to the acceptor end of tRNA(Glu). This chain is Glutamate--tRNA ligase, found in Klebsiella pneumoniae (strain 342).